A 169-amino-acid polypeptide reads, in one-letter code: CKLF-like MARVEL transmembrane domain-containing protein 2A (169 aa).

Transmembrane regions (helical) follow at residues 40 to 60 (FWLS…ISAL), 69 to 89 (HPVL…FIFL), 98 to 118 (IPFV…CVFL), and 136 to 156 (YLTA…DMLL). The MARVEL domain occupies 40–162 (FWLSGHAVFK…DMLLQFQHFR (123 aa)).

The protein belongs to the chemokine-like factor family.

The protein resides in the membrane. In Mus musculus (Mouse), this protein is CKLF-like MARVEL transmembrane domain-containing protein 2A (Cmtm2a).